A 308-amino-acid chain; its full sequence is Ribosomal RNA large subunit methyltransferase F (308 aa).

It belongs to the methyltransferase superfamily. METTL16/RlmF family.

It localises to the cytoplasm. It catalyses the reaction adenosine(1618) in 23S rRNA + S-adenosyl-L-methionine = N(6)-methyladenosine(1618) in 23S rRNA + S-adenosyl-L-homocysteine + H(+). Specifically methylates the adenine in position 1618 of 23S rRNA. The sequence is that of Ribosomal RNA large subunit methyltransferase F from Escherichia coli (strain K12 / MC4100 / BW2952).